Here is a 101-residue protein sequence, read N- to C-terminus: MAKTSSVEKNNRRRKLADQYGPKRAALKAIIMDQSKPMEERFRAQLKLAALPRNSAKIRIRNRCEVTGRPRAYYRKLKVSRIALRDLGNNGQIPGLVKSSW.

The segment at 1-21 is disordered; the sequence is MAKTSSVEKNNRRRKLADQYG.

This sequence belongs to the universal ribosomal protein uS14 family. As to quaternary structure, part of the 30S ribosomal subunit. Contacts proteins S3 and S10.

Binds 16S rRNA, required for the assembly of 30S particles and may also be responsible for determining the conformation of the 16S rRNA at the A site. The chain is Small ribosomal subunit protein uS14 from Mesorhizobium japonicum (strain LMG 29417 / CECT 9101 / MAFF 303099) (Mesorhizobium loti (strain MAFF 303099)).